Consider the following 200-residue polypeptide: Pyridoxal 5'-phosphate synthase subunit PdxT (200 aa).

52–54 (GES) provides a ligand contact to L-glutamine. The Nucleophile role is filled by C84. Residues R116 and 145–146 (IR) contribute to the L-glutamine site. Catalysis depends on charge relay system residues H181 and E183.

The protein belongs to the glutaminase PdxT/SNO family. In the presence of PdxS, forms a dodecamer of heterodimers. Only shows activity in the heterodimer.

It carries out the reaction aldehydo-D-ribose 5-phosphate + D-glyceraldehyde 3-phosphate + L-glutamine = pyridoxal 5'-phosphate + L-glutamate + phosphate + 3 H2O + H(+). The enzyme catalyses L-glutamine + H2O = L-glutamate + NH4(+). It participates in cofactor biosynthesis; pyridoxal 5'-phosphate biosynthesis. In terms of biological role, catalyzes the hydrolysis of glutamine to glutamate and ammonia as part of the biosynthesis of pyridoxal 5'-phosphate. The resulting ammonia molecule is channeled to the active site of PdxS. In Saccharolobus islandicus (strain Y.N.15.51 / Yellowstone #2) (Sulfolobus islandicus), this protein is Pyridoxal 5'-phosphate synthase subunit PdxT.